The following is a 459-amino-acid chain: MCKYGKSNLAAVASSTSSIIGAAAAAVAEAQPSASPSTSSSFLLLEVPFRHLLRLQPPPYFIAGTRRMAAQLDVTTLIAIVGFVFVFCLYLIHIIALSYSKYRLHHKVKEDSSLPGVSIIKPIVGKDNNLYENIESFFTTQYHKYELLFCFNSSDDEAVEVVKCLMKKYPKVDAKLFFGGETVGLNPKINNMMPAYRSALYPLILVSDSGIFMRSDGVLDMATTMMSHEKMALVTQTPYCKDREGFDAAFEQMYFGTSHGRIYLAGNCMDFVCSTGMSSMMKKEALDECGGISNFGGYLAEDYFFGRELANRGYKSAISSHPALQNSSSVSVSSFLDRICRWVKLRIAMLPHILLVEPLQDCFPSGLIMAFSLNHLVGLNIMPILILHTIYWFSMDYSLMNSMQNGKLSFSPLQFMLIWLLRELTAPFVFIKALLQPTIQWRNNVFHLAWGGQILPPKC.

The helical transmembrane segment at 77 to 97 (LIAIVGFVFVFCLYLIHIIAL) threads the bilayer. Asp156 is a short sequence motif (D1). Residue Asp208 is a short sequence motif, D2. Position 302 (Asp302) is a short sequence motif, D3. Asp302 serves as the catalytic Proton acceptor. The (Q/R)XXRW motif lies at 338–342 (RICRW). A run of 2 helical transmembrane segments spans residues 367-387 (LIMAFSLNHLVGLNIMPILIL) and 415-435 (FMLIWLLRELTAPFVFIKALL).

Belongs to the glycosyltransferase 2 family. As to expression, expressed in pharyngeal intestinal valve, intestinal rectal valve and hypodermis.

The protein localises to the membrane. It carries out the reaction an N-acylsphing-4-enine + UDP-alpha-D-glucose = a beta-D-glucosyl-(1&lt;-&gt;1')-N-acylsphing-4-enine + UDP + H(+). The catalysed reaction is an N-acyl-15-methylhexadecasphing-4-enine + UDP-alpha-D-glucose = an N-acyl-1-beta-D-glucosyl-15-methylhexadecasphing-4-enine + UDP + H(+). It functions in the pathway lipid metabolism; sphingolipid metabolism. Catalyzes the first glycosylation step in glycosphingolipid biosynthesis, the transfer of glucose to ceramide to produce glucosylceramides (GlcCer). GlcCer are known to contribute to the physical properties and physiological functions of membranes and may regulate signal transduction. Seems to be the major active form in the nematode. Only branched-chain sphingoid bases like 15-methylhexadecasphing-4-enine are used for generating complex sphingolipids in Caenorhabditis elegans. Together with cgt-1, plays a role in the trafficking of proteins such as mig-14 to the cell membrane in intestinal cells. The sequence is that of Ceramide glucosyltransferase 3 from Caenorhabditis elegans.